A 379-amino-acid polypeptide reads, in one-letter code: Homoserine O-succinyltransferase (379 aa).

Residues 48–357 (NAVLICHALS…SAHGHDAFLM (310 aa)) form the AB hydrolase-1 domain. The active-site Nucleophile is S154. R224 contributes to the substrate binding site. Residues D319 and H352 contribute to the active site. Residue D353 coordinates substrate.

Belongs to the AB hydrolase superfamily. MetX family. As to quaternary structure, homodimer.

Its subcellular location is the cytoplasm. It catalyses the reaction L-homoserine + succinyl-CoA = O-succinyl-L-homoserine + CoA. It functions in the pathway amino-acid biosynthesis; L-methionine biosynthesis via de novo pathway; O-succinyl-L-homoserine from L-homoserine: step 1/1. Its function is as follows. Transfers a succinyl group from succinyl-CoA to L-homoserine, forming succinyl-L-homoserine. This is Homoserine O-succinyltransferase from Neisseria meningitidis serogroup A / serotype 4A (strain DSM 15465 / Z2491).